Here is a 318-residue protein sequence, read N- to C-terminus: Porphobilinogen deaminase (318 aa).

Cys248 is modified (S-(dipyrrolylmethanemethyl)cysteine).

The protein belongs to the HMBS family. In terms of assembly, monomer. It depends on dipyrromethane as a cofactor.

The enzyme catalyses 4 porphobilinogen + H2O = hydroxymethylbilane + 4 NH4(+). The protein operates within porphyrin-containing compound metabolism; protoporphyrin-IX biosynthesis; coproporphyrinogen-III from 5-aminolevulinate: step 2/4. Its function is as follows. Tetrapolymerization of the monopyrrole PBG into the hydroxymethylbilane pre-uroporphyrinogen in several discrete steps. This Caulobacter sp. (strain K31) protein is Porphobilinogen deaminase.